A 565-amino-acid chain; its full sequence is Adenine deaminase 1 (565 aa).

The protein belongs to the metallo-dependent hydrolases superfamily. Adenine deaminase family. Requires Mn(2+) as cofactor.

The enzyme catalyses adenine + H2O + H(+) = hypoxanthine + NH4(+). This is Adenine deaminase 1 from Rhizobium meliloti (strain 1021) (Ensifer meliloti).